Here is a 312-residue protein sequence, read N- to C-terminus: Ribosomal RNA small subunit methyltransferase H (312 aa).

Residues glycine 35–histidine 37, aspartate 54, phenylalanine 81, aspartate 100, and glutamine 107 each bind S-adenosyl-L-methionine.

It belongs to the methyltransferase superfamily. RsmH family.

Its subcellular location is the cytoplasm. It carries out the reaction cytidine(1402) in 16S rRNA + S-adenosyl-L-methionine = N(4)-methylcytidine(1402) in 16S rRNA + S-adenosyl-L-homocysteine + H(+). Its function is as follows. Specifically methylates the N4 position of cytidine in position 1402 (C1402) of 16S rRNA. This chain is Ribosomal RNA small subunit methyltransferase H, found in Campylobacter jejuni subsp. jejuni serotype O:2 (strain ATCC 700819 / NCTC 11168).